The sequence spans 225 residues: Rho GDP-dissociation inhibitor 3 (225 aa).

The protein belongs to the Rho GDI family.

Its subcellular location is the cytoplasm. Its function is as follows. Inhibits GDP/GTP exchange reaction of RhoB. Interacts specifically with the GDP- and GTP-bound forms of post-translationally processed Rhob and Rhog proteins, both of which show a growth-regulated expression in mammalian cells. Stimulates the release of the GDP-bound but not the GTP-bound RhoB protein. Also inhibits the GDP/GTP exchange of RhoB but shows less ability to inhibit the dissociation of prebound GTP. This chain is Rho GDP-dissociation inhibitor 3 (ARHGDIG), found in Bos taurus (Bovine).